A 340-amino-acid chain; its full sequence is Glycerol-3-phosphate dehydrogenase [NAD(P)+] (340 aa).

Residues Ser-14, Tyr-15, His-35, and Lys-109 each contribute to the NADPH site. Residues Lys-109, Gly-138, and Thr-140 each contribute to the sn-glycerol 3-phosphate site. Ala-142 is a binding site for NADPH. The sn-glycerol 3-phosphate site is built by Lys-194, Asp-247, Ser-257, Arg-258, and Asn-259. Lys-194 functions as the Proton acceptor in the catalytic mechanism. NADPH is bound at residue Arg-258. Residues Val-282 and Glu-284 each contribute to the NADPH site.

It belongs to the NAD-dependent glycerol-3-phosphate dehydrogenase family.

The protein localises to the cytoplasm. The enzyme catalyses sn-glycerol 3-phosphate + NAD(+) = dihydroxyacetone phosphate + NADH + H(+). It carries out the reaction sn-glycerol 3-phosphate + NADP(+) = dihydroxyacetone phosphate + NADPH + H(+). It participates in membrane lipid metabolism; glycerophospholipid metabolism. Catalyzes the reduction of the glycolytic intermediate dihydroxyacetone phosphate (DHAP) to sn-glycerol 3-phosphate (G3P), the key precursor for phospholipid synthesis. The chain is Glycerol-3-phosphate dehydrogenase [NAD(P)+] from Photorhabdus laumondii subsp. laumondii (strain DSM 15139 / CIP 105565 / TT01) (Photorhabdus luminescens subsp. laumondii).